The primary structure comprises 563 residues: MTVLEITLAVILTLLGLAILAILLTRWARCKQSEMYISRYSSEQSARLLDYEDGRGSRHAYSTQSDTSYDNRERSKRDYTPSTNSLVSMASKFSLGQTELILLLMCFILALSRSSIGSIKCLQTTEEPPSRTAGAMMQFTAPIPGATGPIKLSQKTIVQTPGPIVQYPGSNAGPPSAPRGPPMAPIIISQRTARIPQVHTMDSSGKITLTPVVILTGYMDEELAKKSCSKIQILKCGGTARSQNSREENKEALKNDIIFTNSVESLKSAHIKEPEREGKGTDLEKDKIGMEVKVDSDAGIPKRQETQLKISEMSIPQGQGAQIKKSVSDVPRGQESQVKKSESGVPKGQEAQVTKSGLVVLKGQEAQVEKSEMGVPRRQESQVKKSQSGVSKGQEAQVKKRESVVLKGQEAQVEKSELKVPKGQEGQVEKTEADVPKEQEVQEKKSEAGVLKGPESQVKNTEVSVPETLESQVKKSESGVLKGQEAQEKKESFEDKGNNDKEKERDAEKDPNKKEKGDKNTKGDKGKDKVKGKRESEINGEKSKGSKRAKANTGRKYNKKVEE.

Residues 3–23 (VLEITLAVILTLLGLAILAIL) traverse the membrane as a helical segment. The tract at residues 56–81 (GSRHAYSTQSDTSYDNRERSKRDYTP) is disordered. Basic and acidic residues predominate over residues 69–79 (YDNRERSKRDY). Residues 99–119 (ELILLLMCFILALSRSSIGSI) form a helical membrane-spanning segment. The disordered stretch occupies residues 311 to 563 (SEMSIPQGQG…GRKYNKKVEE (253 aa)). A compositionally biased stretch (basic and acidic residues) spans 367 to 383 (QVEKSEMGVPRRQESQV). Residues 384–395 (KKSQSGVSKGQE) show a composition bias toward low complexity. Composition is skewed to basic and acidic residues over residues 412–447 (QVEK…KKSE) and 485–544 (EAQE…EKSK).

It is found in the membrane. The sequence is that of Testis-expressed basic protein 1 from Homo sapiens (Human).